We begin with the raw amino-acid sequence, 528 residues long: T-complex protein 1 subunit delta (528 aa).

Belongs to the TCP-1 chaperonin family. Heterooligomeric complex of about 850 to 900 kDa that forms two stacked rings, 12 to 16 nm in diameter.

The protein resides in the cytoplasm. Functionally, molecular chaperone; assists the folding of proteins upon ATP hydrolysis. Known to play a role, in vitro, in the folding of actin and tubulin. In yeast may play a role in mitotic spindle formation. This is T-complex protein 1 subunit delta (CCT4) from Saccharomyces cerevisiae (strain ATCC 204508 / S288c) (Baker's yeast).